Reading from the N-terminus, the 485-residue chain is GlcNAc-binding protein A (485 aa).

Residues 1 to 29 form the signal peptide; it reads MKKQPQKTLLAIALSVVSGTAMSHGYVSA. The region spanning 30–200 is the Chitin-binding type-4 domain; the sequence is VENGVAEARV…SFYNVIDVKF (171 aa). Residues 437 to 478 form the Chitin-binding type-3 domain; it reads ADTKVLASDGAIYQCKPFPYSGYCVQWTPTATQYQPGTGSHW.

Belongs to the GbpA family.

It is found in the secreted. Its function is as follows. Probably interacts with GlcNAc residues. May promote attachment to both epithelial cell surfaces and chitin. In Vibrio vulnificus (strain CMCP6), this protein is GlcNAc-binding protein A.